Reading from the N-terminus, the 225-residue chain is Polyadenylate-binding protein 2 (225 aa).

The segment covering 1–36 has biased composition (acidic residues); sequence MADEDISLNEDQLLESMEETNGEQETEIVTETEEEG. The segment at 1–42 is disordered; the sequence is MADEDISLNEDQLLESMEETNGEQETEIVTETEEEGSMQIDP. Residues 14–74 adopt a coiled-coil conformation; it reads LESMEETNGE…QSEVDKQMAG (61 aa). In terms of domain architecture, RRM spans 96–173; sequence RSVYVGNVDY…RQIKVMSKRT (78 aa).

The protein localises to the nucleus. It is found in the cytoplasm. In terms of biological role, involved in the 3'-end formation of mRNA precursors (pre-mRNA) by the addition of a poly(A) tail of 200-250 nt to the upstream cleavage product. Stimulates poly(A) polymerase (PAPOLA) conferring processivity on the poly(A) tail elongation reaction and also controls the poly(A) tail length. Increases the affinity of poly(A) polymerase for RNA. Binds to poly(A) and to poly(G) with high affinity. May protect the poly(A) tail from degradation. The polypeptide is Polyadenylate-binding protein 2 (Drosophila pseudoobscura pseudoobscura (Fruit fly)).